Consider the following 569-residue polypeptide: AA9 family lytic polysaccharide monooxygenase A (569 aa).

The first 16 residues, 1–16 (MRIFSLALGFLPLVAG), serve as a signal peptide directing secretion. Residues H17 and H99 each contribute to the Cu(2+) site. C59 and C189 are oxidised to a cystine. N112 carries an N-linked (GlcNAc...) asparagine glycan. 2 residues coordinate O2: H174 and Q184. Y186 provides a ligand contact to Cu(2+). Residues N244 and N381 are each glycosylated (N-linked (GlcNAc...) asparagine). Over residues 399 to 424 (AADATATATATTEDAEATTAAEAAAT) the composition is skewed to low complexity. Positions 399–439 (AADATATATATTEDAEATTAAEAAATSGAGRPGRGHGHGRG) are disordered. Residue N472 is glycosylated (N-linked (GlcNAc...) asparagine).

It belongs to the polysaccharide monooxygenase AA9 family. Requires Cu(2+) as cofactor.

Its subcellular location is the secreted. The enzyme catalyses [(1-&gt;4)-beta-D-glucosyl]n+m + reduced acceptor + O2 = 4-dehydro-beta-D-glucosyl-[(1-&gt;4)-beta-D-glucosyl]n-1 + [(1-&gt;4)-beta-D-glucosyl]m + acceptor + H2O.. Lytic polysaccharide monooxygenase (LPMO) that depolymerizes crystalline and amorphous polysaccharides via the oxidation of scissile alpha- or beta-(1-4)-glycosidic bonds, yielding C4 oxidation products. Catalysis by LPMOs requires the reduction of the active-site copper from Cu(II) to Cu(I) by a reducing agent and H(2)O(2) or O(2) as a cosubstrate. The protein is AA9 family lytic polysaccharide monooxygenase A of Emericella nidulans (strain FGSC A4 / ATCC 38163 / CBS 112.46 / NRRL 194 / M139) (Aspergillus nidulans).